Reading from the N-terminus, the 487-residue chain is Glutamate--tRNA ligase (487 aa).

The short motif at 12-22 (PSPTGYMHVGN) is the 'HIGH' region element. A 'KMSKS' region motif is present at residues 249-253 (KLSKR). Lys-252 serves as a coordination point for ATP.

It belongs to the class-I aminoacyl-tRNA synthetase family. Glutamate--tRNA ligase type 1 subfamily. As to quaternary structure, monomer.

It is found in the cytoplasm. It catalyses the reaction tRNA(Glu) + L-glutamate + ATP = L-glutamyl-tRNA(Glu) + AMP + diphosphate. Catalyzes the attachment of glutamate to tRNA(Glu) in a two-step reaction: glutamate is first activated by ATP to form Glu-AMP and then transferred to the acceptor end of tRNA(Glu). This Clostridium novyi (strain NT) protein is Glutamate--tRNA ligase.